We begin with the raw amino-acid sequence, 367 residues long: tRNA(Ile)-lysidine synthase, chloroplastic (367 aa).

Serine 64–serine 69 serves as a coordination point for ATP.

It belongs to the tRNA(Ile)-lysidine synthase family.

The protein resides in the plastid. It localises to the chloroplast. It carries out the reaction cytidine(34) in tRNA(Ile2) + L-lysine + ATP = lysidine(34) in tRNA(Ile2) + AMP + diphosphate + H(+). Ligates lysine onto the cytidine present at position 34 of the AUA codon-specific tRNA(Ile) that contains the anticodon CAU, in an ATP-dependent manner. Cytidine is converted to lysidine, thus changing the amino acid specificity of the tRNA from methionine to isoleucine. This Nephroselmis olivacea (Green alga) protein is tRNA(Ile)-lysidine synthase, chloroplastic.